The following is a 199-amino-acid chain: Recombination protein RecR (199 aa).

The C4-type zinc finger occupies 57–72 (CSVCGNLTDDDPCNIC). The 97-residue stretch at 80-176 (STVLVVEDSK…TVTRLARGLA (97 aa)) folds into the Toprim domain.

The protein belongs to the RecR family.

Its function is as follows. May play a role in DNA repair. It seems to be involved in an RecBC-independent recombinational process of DNA repair. It may act with RecF and RecO. The protein is Recombination protein RecR of Streptococcus mutans serotype c (strain ATCC 700610 / UA159).